We begin with the raw amino-acid sequence, 229 residues long: C-&gt;U-editing enzyme APOBEC-1 (229 aa).

Residues valine 10–leucine 134 form the CMP/dCMP-type deaminase domain. Position 61 (histidine 61) interacts with Zn(2+). Catalysis depends on glutamate 63, which acts as the Proton donor. Residues cysteine 93 and cysteine 96 each coordinate Zn(2+).

The protein belongs to the cytidine and deoxycytidylate deaminase family. Homodimer. Interacts with A1CF; form an mRNA editing complex. Interacts with RBM47; form an mRNA editing complex. Found in a complex with CELF2/CUGBP2 and A1CF. Interacts with HNRPAB. Interacts with SYNCRIP. Zn(2+) is required as a cofactor. In terms of tissue distribution, expressed in the spleen. Expressed at lower level in the kidney, testis, lung, brain and liver.

The protein resides in the cytoplasm. The protein localises to the nucleus. It catalyses the reaction a cytidine in mRNA + H2O + H(+) = a uridine in mRNA + NH4(+). The enzyme catalyses cytidine(6666) in apoB mRNA + H2O + H(+) = uridine(6666) in apoB mRNA + NH4(+). In terms of biological role, cytidine deaminase catalyzing the cytidine to uridine postranscriptional editing of a variety of mRNAs. Form complexes with cofactors that confer differential editing activity and selectivity. Responsible for the postranscriptional editing of a CAA codon for Gln to a UAA codon for stop in the apolipoprotein B mRNA. Also involved in CGA (Arg) to UGA (Stop) editing in the NF1 mRNA. May also play a role in the epigenetic regulation of gene expression by participating in DNA demethylation. The chain is C-&gt;U-editing enzyme APOBEC-1 from Mus musculus (Mouse).